Here is a 189-residue protein sequence, read N- to C-terminus: Myb-like protein T (189 aa).

Positions 121-172 constitute a Myb-like domain; the sequence is NWSPDEQKALMVEVSTLGNKSEINWFFISQQLFLKGISRNARECQRKHESIQ.

The chain is Myb-like protein T (mybT) from Dictyostelium discoideum (Social amoeba).